The following is a 569-amino-acid chain: Glutamate--tRNA ligase (569 aa).

Positions 108-118 match the 'HIGH' region motif; the sequence is PNPDFVLHLGS.

Belongs to the class-I aminoacyl-tRNA synthetase family. Glutamate--tRNA ligase type 2 subfamily.

The protein localises to the cytoplasm. The catalysed reaction is tRNA(Glu) + L-glutamate + ATP = L-glutamyl-tRNA(Glu) + AMP + diphosphate. Functionally, catalyzes the attachment of glutamate to tRNA(Glu) in a two-step reaction: glutamate is first activated by ATP to form Glu-AMP and then transferred to the acceptor end of tRNA(Glu). The polypeptide is Glutamate--tRNA ligase (Thermofilum pendens (strain DSM 2475 / Hrk 5)).